Here is a 407-residue protein sequence, read N- to C-terminus: Inhibin beta B chain (407 aa).

The N-terminal stretch at 1-28 is a signal peptide; sequence MDGLPGRALGAACLLLLAAGWLGPEAWG. The tract at residues 27 to 60 is disordered; that stretch reads WGSPTPPPSPAAPPPPPPPGALGGSQDTCTSCGG. A propeptide spanning residues 29-292 is cleaved from the precursor; it reads SPTPPPSPAA…VDSRHRIRKR (264 aa). Pro residues predominate over residues 30–46; it reads PTPPPSPAAPPPPPPPG. Asn-93 carries an N-linked (GlcNAc...) asparagine glycan. 4 cysteine pairs are disulfide-bonded: Cys-296-Cys-304, Cys-303-Cys-372, Cys-332-Cys-404, and Cys-336-Cys-406.

This sequence belongs to the TGF-beta family. As to quaternary structure, dimeric, linked by one or more disulfide bonds. Inhibin B is a dimer of alpha and beta-B. Activin B is a homodimer of beta-B. Activin AB is a dimer of beta-A and beta-B. Interacts with FST and FSTL3.

It localises to the secreted. Functionally, inhibins and activins inhibit and activate, respectively, the secretion of follitropin by the pituitary gland. Inhibins/activins are involved in regulating a number of diverse functions such as hypothalamic and pituitary hormone secretion, gonadal hormone secretion, germ cell development and maturation, erythroid differentiation, insulin secretion, nerve cell survival, embryonic axial development or bone growth, depending on their subunit composition. Inhibins appear to oppose the functions of activins. Its function is as follows. Activin B is a dimer of alpha and beta-B that plays a role in several essential biological processes including embryonic development, stem cell maintenance and differentiation, haematopoiesis, cell proliferation and wound healing. Signals through type I receptor ACVR1C, abundantly expressed in pancreatic beta cells, and type II receptors like ACVR2A. Upon ligand binding, these receptors phosphorylate intracellular signaling mediators SMAD2 and SMAD3, which form a complex with SMAD4, translocate to the nucleus, and regulate gene expression. Plays a crucial role in the induction of hepcidin by inflammation through activation of ACVR1C and subsequent phosphorylation of SMAD1/5/8. Regulates adipocyte lipid metabolism by decreasing non-esterified fatty acids and glycerol release and increases intracellular triglyceride content. Stimulates wound healing by promoting cell migration and hair follicle regeneration through the JNK and ERK signaling pathways downstream of RHOA. In terms of biological role, inhibin B is a dimer of alpha and beta-B that plays a crucial role in the regulation of the reproductive system by inhibiting the secretion of follicle-stimulating hormone (FSH) from the anterior pituitary gland. Thereby, maintains reproductive homeostasis in both males and females. Acts as a more potent suppressor of FSH release than inhibin A. Functions as competitive receptor antagonist binding activin type II receptors with high affinity in the presence of the TGF-beta type III coreceptor/TGFBR3L. The chain is Inhibin beta B chain (INHBB) from Sus scrofa (Pig).